The chain runs to 781 residues: LPS-assembly protein LptD (781 aa).

An N-terminal signal peptide occupies residues 1–24 (MKKNYYTVLSLSILTALYSTSSQA).

This sequence belongs to the LptD family. As to quaternary structure, component of the lipopolysaccharide transport and assembly complex. Interacts with LptE and LptA.

Its subcellular location is the cell outer membrane. Functionally, together with LptE, is involved in the assembly of lipopolysaccharide (LPS) at the surface of the outer membrane. The protein is LPS-assembly protein LptD of Histophilus somni (strain 129Pt) (Haemophilus somnus).